Reading from the N-terminus, the 205-residue chain is MVSGSGIAAKRVVVDARHHMLGRLASIVAKELLNGQKVVIVRSEEICISGGLVRQKMKYLRFLRKRMNTKPSHGPIHCAPSKIFWRTVRGMIPHKTKRGEHALARLKVYEGIPPPFDKQKRLVVPDALKVLRLQKGHKYCLLGQLSSEVGWNYYDTIKELEKKRKERSQVVYERKKQLNKLRVKAEQVAQEKLGSQLDILAPVKY.

The protein belongs to the universal ribosomal protein uL13 family.

The polypeptide is Large ribosomal subunit protein uL13 (RPL13A) (Lupinus luteus (European yellow lupine)).